The following is a 189-amino-acid chain: Cytochrome b6-f complex subunit 4 (189 aa).

The next 3 membrane-spanning stretches (helical) occupy residues 36–56 (LSYI…GLAV), 103–123 (LLGV…PFLE), and 139–159 (TVSL…ALPI).

Belongs to the cytochrome b family. PetD subfamily. As to quaternary structure, the 4 large subunits of the cytochrome b6-f complex are cytochrome b6, subunit IV (17 kDa polypeptide, petD), cytochrome f and the Rieske protein, while the 4 small subunits are petG, petL, petM and petN. The complex functions as a dimer.

The protein resides in the plastid. The protein localises to the chloroplast thylakoid membrane. In terms of biological role, component of the cytochrome b6-f complex, which mediates electron transfer between photosystem II (PSII) and photosystem I (PSI), cyclic electron flow around PSI, and state transitions. The polypeptide is Cytochrome b6-f complex subunit 4 (Pinus koraiensis (Korean pine)).